The following is an 85-amino-acid chain: Anti-neuroexcitation peptide 3 (85 aa).

Residues 1–21 (MKLSLLLVISASMLIDGLVNA) form the signal peptide. The LCN-type CS-alpha/beta domain occupies 22–82 (DGYIRGSNGC…TWKSESNTCG (61 aa)). 4 disulfides stabilise this stretch: cysteine 31–cysteine 81, cysteine 35–cysteine 56, cysteine 42–cysteine 63, and cysteine 46–cysteine 65.

This sequence belongs to the long (4 C-C) scorpion toxin superfamily. Sodium channel inhibitor family. Beta subfamily. As to expression, expressed by the venom gland.

The protein resides in the secreted. In terms of biological role, binds to sodium channels (Nav) and inhibits them. Recombinant ANEP delays the convulsion seizure of model animals by 18% and shows anti-neuroexcitatory activity. This Olivierus martensii (Manchurian scorpion) protein is Anti-neuroexcitation peptide 3.